The primary structure comprises 1185 residues: Zinc finger SWIM domain-containing protein 5 (1185 aa).

Over residues 1 to 10 the composition is skewed to basic and acidic residues; sequence MADGGEREEL. Disordered stretches follow at residues 1-45 and 123-153; these read MADG…GGAG and AGAA…GSAP. The SWIM-type zinc finger occupies 219–256; sequence YKVAISFDRCKITSVTCGCGNKDIFYCAHVVALSLYRI.

This chain is Zinc finger SWIM domain-containing protein 5 (ZSWIM5), found in Homo sapiens (Human).